Consider the following 399-residue polypeptide: Putative endoplasmin-like protein (399 aa).

Lys-130 participates in a covalent cross-link: Glycyl lysine isopeptide (Lys-Gly) (interchain with G-Cter in SUMO2). A disordered region spans residues 350–399; sequence LDLAVVEEPDEEPEETAEDKEQDKDKEMDVGTDEEKQETAKESTAEKDEL. The segment covering 354–367 has biased composition (acidic residues); sequence VVEEPDEEPEETAE. A compositionally biased stretch (basic and acidic residues) spans 368 to 399; sequence DKEQDKDKEMDVGTDEEKQETAKESTAEKDEL.

It belongs to the heat shock protein 90 family.

Putative molecular chaperone. The protein is Putative endoplasmin-like protein (HSP90B2P) of Homo sapiens (Human).